The primary structure comprises 346 residues: Phosphoribosylformylglycinamidine cyclo-ligase (346 aa).

It belongs to the AIR synthase family.

The protein resides in the cytoplasm. It carries out the reaction 2-formamido-N(1)-(5-O-phospho-beta-D-ribosyl)acetamidine + ATP = 5-amino-1-(5-phospho-beta-D-ribosyl)imidazole + ADP + phosphate + H(+). It functions in the pathway purine metabolism; IMP biosynthesis via de novo pathway; 5-amino-1-(5-phospho-D-ribosyl)imidazole from N(2)-formyl-N(1)-(5-phospho-D-ribosyl)glycinamide: step 2/2. This Aliivibrio fischeri (strain ATCC 700601 / ES114) (Vibrio fischeri) protein is Phosphoribosylformylglycinamidine cyclo-ligase.